Here is a 210-residue protein sequence, read N- to C-terminus: Somatotropin-1 (210 aa).

Positions 1–22 (MARALVLLSVVLVSLLVNQGRA) are cleaved as a signal peptide. His-38 is a Zn(2+) binding site. Cys-71 and Cys-183 are oxidised to a cystine. A Zn(2+)-binding site is contributed by Glu-192. An intrachain disulfide couples Cys-200 to Cys-208.

This sequence belongs to the somatotropin/prolactin family.

Its subcellular location is the secreted. Its function is as follows. Growth hormone plays an important role in growth control and is involved in the regulation of several anabolic processes. Implicated as an osmoregulatory substance important for seawater adaptation. The polypeptide is Somatotropin-1 (gh1) (Carassius auratus (Goldfish)).